The following is a 283-amino-acid chain: Bifunctional protein FolD (283 aa).

NADP(+) contacts are provided by residues 166–168 (GRS), Ser-191, and Ile-232.

It belongs to the tetrahydrofolate dehydrogenase/cyclohydrolase family. Homodimer.

The catalysed reaction is (6R)-5,10-methylene-5,6,7,8-tetrahydrofolate + NADP(+) = (6R)-5,10-methenyltetrahydrofolate + NADPH. It catalyses the reaction (6R)-5,10-methenyltetrahydrofolate + H2O = (6R)-10-formyltetrahydrofolate + H(+). Its pathway is one-carbon metabolism; tetrahydrofolate interconversion. Functionally, catalyzes the oxidation of 5,10-methylenetetrahydrofolate to 5,10-methenyltetrahydrofolate and then the hydrolysis of 5,10-methenyltetrahydrofolate to 10-formyltetrahydrofolate. The chain is Bifunctional protein FolD from Rickettsia bellii (strain RML369-C).